The primary structure comprises 155 residues: Small ribosomal subunit protein uS7cz/uS7cy (155 aa).

Belongs to the universal ribosomal protein uS7 family. Part of the 30S ribosomal subunit.

The protein localises to the plastid. In terms of biological role, one of the primary rRNA binding proteins, it binds directly to 16S rRNA where it nucleates assembly of the head domain of the 30S subunit. This chain is Small ribosomal subunit protein uS7cz/uS7cy (rps7-A), found in Epifagus virginiana (Beechdrops).